The chain runs to 393 residues: NAD(P)H-quinone oxidoreductase subunit H, chloroplastic (393 aa).

The protein belongs to the complex I 49 kDa subunit family. In terms of assembly, NDH is composed of at least 16 different subunits, 5 of which are encoded in the nucleus.

It is found in the plastid. The protein localises to the chloroplast thylakoid membrane. It carries out the reaction a plastoquinone + NADH + (n+1) H(+)(in) = a plastoquinol + NAD(+) + n H(+)(out). It catalyses the reaction a plastoquinone + NADPH + (n+1) H(+)(in) = a plastoquinol + NADP(+) + n H(+)(out). In terms of biological role, NDH shuttles electrons from NAD(P)H:plastoquinone, via FMN and iron-sulfur (Fe-S) centers, to quinones in the photosynthetic chain and possibly in a chloroplast respiratory chain. The immediate electron acceptor for the enzyme in this species is believed to be plastoquinone. Couples the redox reaction to proton translocation, and thus conserves the redox energy in a proton gradient. The protein is NAD(P)H-quinone oxidoreductase subunit H, chloroplastic of Hordeum vulgare (Barley).